The sequence spans 164 residues: Cytochrome c-type biogenesis protein CcmE (164 aa).

The Cytoplasmic segment spans residues 1–7 (MTRKQRR). Residues 8-28 (LLMIGGAGVVLVVAVGLVLNA) traverse the membrane as a helical; Signal-anchor for type II membrane protein segment. Over 29–164 (MRGSIVFFST…ASADAAGPSR (136 aa)) the chain is Periplasmic. His-122 and Tyr-126 together coordinate heme. The segment covering 137–149 (KQGHWKDDYEKKP) has biased composition (basic and acidic residues). The tract at residues 137 to 164 (KQGHWKDDYEKKPPGAPGASADAAGPSR) is disordered. Positions 153-164 (PGASADAAGPSR) are enriched in low complexity.

The protein belongs to the CcmE/CycJ family.

It localises to the cell inner membrane. In terms of biological role, heme chaperone required for the biogenesis of c-type cytochromes. Transiently binds heme delivered by CcmC and transfers the heme to apo-cytochromes in a process facilitated by CcmF and CcmH. In Rhodopseudomonas palustris (strain BisB5), this protein is Cytochrome c-type biogenesis protein CcmE.